The following is a 387-amino-acid chain: MKKILGIESSCDDTAISIITESRKILSNIIIPQNTEHAVFGGVVPEIAARSHLSNLDQALENVLTKSNTELTEISAIAATSGPGLIGGVIVGSMFARSLSSALNKPFIAINHLEGHALTVRLTDNISYPYLLLLASGGHCQFVAVLGLGKYKILGSTIDDAIGETFDKVAKMLNLSFPGGPEIEKRAKLGNPHKYKFPKPIINSGNCNMSFSGLKTAVRNLIMSLKEVNDSVINDIAASFQFTIGAILSSKMLNAIRLYQQILNYYYENVDYTTNLNLKSFRQDEFNLNHLQDITRPKSRIYLQNSFRSNLLNDTIVIAGGVAANKYLQEILSNCTQTYGYRLIAPPMHLCTDNAAMIAYAGLERYNNKLFSPLNFCPKAKWSLEDI.

Fe cation contacts are provided by His-112 and His-116. Substrate contacts are provided by residues 134-138 (LASGG), Asp-167, Gly-180, and Asn-325. Asp-353 is a Fe cation binding site.

This sequence belongs to the KAE1 / TsaD family. Fe(2+) serves as cofactor.

It localises to the cytoplasm. The catalysed reaction is L-threonylcarbamoyladenylate + adenosine(37) in tRNA = N(6)-L-threonylcarbamoyladenosine(37) in tRNA + AMP + H(+). Required for the formation of a threonylcarbamoyl group on adenosine at position 37 (t(6)A37) in tRNAs that read codons beginning with adenine. Is involved in the transfer of the threonylcarbamoyl moiety of threonylcarbamoyl-AMP (TC-AMP) to the N6 group of A37, together with TsaE and TsaB. TsaD likely plays a direct catalytic role in this reaction. This is tRNA N6-adenosine threonylcarbamoyltransferase from Rickettsia typhi (strain ATCC VR-144 / Wilmington).